Here is a 142-residue protein sequence, read N- to C-terminus: Hemoglobin subunit beta-C (142 aa).

The 141-residue stretch at 2–142 (PNKALITGFW…VASALAHRYH (141 aa)) folds into the Globin domain. Heme b-binding residues include His59 and His88.

This sequence belongs to the globin family. Heterotetramer of two alpha chains and two beta chains. In terms of tissue distribution, red blood cells.

Its function is as follows. Involved in oxygen transport from the lung to the various peripheral tissues. The protein is Hemoglobin subunit beta-C (HBBC) of Ovis aries (Sheep).